A 365-amino-acid chain; its full sequence is DNA replication and repair protein RecF (365 aa).

23 to 30 contributes to the ATP binding site; sequence GPNGIGKS.

The protein belongs to the RecF family.

The protein resides in the cytoplasm. Its function is as follows. The RecF protein is involved in DNA metabolism; it is required for DNA replication and normal SOS inducibility. RecF binds preferentially to single-stranded, linear DNA. It also seems to bind ATP. The chain is DNA replication and repair protein RecF from Parasynechococcus marenigrum (strain WH8102).